The chain runs to 196 residues: Mediator of RNA polymerase II transcription subunit 21 (196 aa).

The segment at 52–111 (KIPKNASTPPVPASAPQAAQSQSQASPPPPDTANPQTGGQHADQQQQSPDGEGLPAPDSP) is disordered. Composition is skewed to low complexity over residues 65 to 76 (SAPQAAQSQSQA) and 87 to 98 (QTGGQHADQQQQ). Residues 144–174 (SSEAEQERRIRELEGELRIVEGVREERRREL) adopt a coiled-coil conformation.

It belongs to the Mediator complex subunit 21 family. Component of the Mediator complex.

Its subcellular location is the nucleus. Its function is as follows. Component of the Mediator complex, a coactivator involved in the regulated transcription of nearly all RNA polymerase II-dependent genes. Mediator functions as a bridge to convey information from gene-specific regulatory proteins to the basal RNA polymerase II transcription machinery. Mediator is recruited to promoters by direct interactions with regulatory proteins and serves as a scaffold for the assembly of a functional preinitiation complex with RNA polymerase II and the general transcription factors. In Aspergillus niger (strain ATCC MYA-4892 / CBS 513.88 / FGSC A1513), this protein is Mediator of RNA polymerase II transcription subunit 21 (srb7).